The chain runs to 1071 residues: DNA-directed RNA polymerase subunit beta (1071 aa).

The protein belongs to the RNA polymerase beta chain family. In terms of assembly, in plastids the minimal PEP RNA polymerase catalytic core is composed of four subunits: alpha, beta, beta', and beta''. When a (nuclear-encoded) sigma factor is associated with the core the holoenzyme is formed, which can initiate transcription.

It is found in the plastid. The protein resides in the chloroplast. It carries out the reaction RNA(n) + a ribonucleoside 5'-triphosphate = RNA(n+1) + diphosphate. In terms of biological role, DNA-dependent RNA polymerase catalyzes the transcription of DNA into RNA using the four ribonucleoside triphosphates as substrates. The polypeptide is DNA-directed RNA polymerase subunit beta (Adiantum capillus-veneris (Maidenhair fern)).